The following is a 105-amino-acid chain: Met repressor (105 aa).

It belongs to the MetJ family. Homodimer.

It localises to the cytoplasm. Its function is as follows. This regulatory protein, when combined with SAM (S-adenosylmethionine) represses the expression of the methionine regulon and of enzymes involved in SAM synthesis. This is Met repressor from Haemophilus influenzae (strain PittEE).